The sequence spans 317 residues: Melanocyte-stimulating hormone receptor (317 aa).

Residues 1-37 (MPMQGAQRRLLGSLNSTPTATPNLGLAANHTGAPCLE) are Extracellular-facing. A glycan (N-linked (GlcNAc...) asparagine) is linked at Asn29. A helical membrane pass occupies residues 38 to 63 (VSIPHGLFLSLGLVSLVENVLVVAAI). Over 64 to 72 (AKNRNLHSP) the chain is Cytoplasmic. The chain crosses the membrane as a helical span at residues 73–93 (MYCFICCLALSDLLVSGSNML). Residues 94–118 (ETAVILLLEAGALATRASVVQQLQN) are Extracellular-facing. Residues 119 to 140 (TIDVLTCSSMLCSLCFLGAIAV) traverse the membrane as a helical segment. Residues 141–163 (DRYVSIFYALRYHSIVTLPRARR) lie on the Cytoplasmic side of the membrane. Residues 164-183 (AIAAIWVASVLSSTLFIAYC) traverse the membrane as a helical segment. Residues 184–191 (DHAAVLLC) lie on the Extracellular side of the membrane. A helical transmembrane segment spans residues 192–211 (LVVFFLAMLVLMAVLYVHML). The Cytoplasmic portion of the chain corresponds to 212–240 (ARACQHAQGITRLHKRQLPAHQGFGLRGA). Residues 241-266 (ATLTILLGIFFLCWGPFFLHLMLVVL) traverse the membrane as a helical segment. Over 267 to 279 (CPQHLTCSCIFKN) the chain is Extracellular. The chain crosses the membrane as a helical span at residues 280-300 (FKVFLTLIICNTIIDPLIYAF). Residues 301-317 (RSQELCRTLKEVLLCSW) lie on the Cytoplasmic side of the membrane. The S-palmitoyl cysteine moiety is linked to residue Cys315.

Belongs to the G-protein coupled receptor 1 family. Interacts with MGRN1, but does not undergo MGRN1-mediated ubiquitination; this interaction competes with GNAS-binding and thus inhibits agonist-induced cAMP production. Interacts with OPN3; the interaction results in a decrease in MC1R-mediated cAMP signaling and ultimately a decrease in melanin production in melanocytes.

The protein localises to the cell membrane. In terms of biological role, receptor for MSH (alpha, beta and gamma) and ACTH. The activity of this receptor is mediated by G proteins which activate adenylate cyclase. Mediates melanogenesis, the production of eumelanin (black/brown) and phaeomelanin (red/yellow), via regulation of cAMP signaling in melanocytes. The sequence is that of Melanocyte-stimulating hormone receptor (MC1R) from Alouatta caraya (Black howler monkey).